Here is a 265-residue protein sequence, read N- to C-terminus: MMQRLRLARRGLALSAVRRQTVVPEEEPLDAYEREHLKHRIEITPFQRMLLGAGSSVAAILDPRRHDMIACLGETTGEGALWNILDTMEASEEGQRILIDKPRIHTSTIDFKRLETLPPDTFGAAYVKFLKDNNVTPDSRMPVRFLEDPKLAYLMTRYRECHDLIHTVLNMPTNMLGEVAVKWVEALNTNLPMCYGGAVFGAVRLRPKQRREYLKRYLPWAIDNGKRMKPLMPVYWEQRWEQNLDLAKKTSPIMLPALRITRRDG.

Zn(2+) contacts are provided by H162, D163, H166, and E178.

The protein belongs to the COQ4 family. Component of a multi-subunit COQ enzyme complex. Requires Zn(2+) as cofactor.

It localises to the mitochondrion inner membrane. It catalyses the reaction a 4-hydroxy-3-methoxy-5-(all-trans-polyprenyl)benzoate + H(+) = a 2-methoxy-6-(all-trans-polyprenyl)phenol + CO2. It functions in the pathway cofactor biosynthesis; ubiquinone biosynthesis. In terms of biological role, lyase that catalyzes the C1-decarboxylation of 4-hydroxy-3-methoxy-5-(all-trans-polyprenyl)benzoic acid into 2-methoxy-6-(all-trans-polyprenyl)phenol during ubiquinone biosynthesis. In Drosophila willistoni (Fruit fly), this protein is Ubiquinone biosynthesis protein COQ4 homolog, mitochondrial.